We begin with the raw amino-acid sequence, 357 residues long: Solute carrier family 25 member 3 (357 aa).

The transit peptide at 1–45 (MFSSVAHLARANPFNAPHLQLVHDGLSGPRSPPAPPRRSRHLAAA) directs the protein to the mitochondrion. The Mitochondrial intermembrane segment spans residues 46–58 (AVEEYSCEFGSMK). 3 Solcar repeats span residues 58–142 (KYYA…FKAL), 155–239 (WRTS…TVEA), and 256–334 (EQLV…VKVY). A helical transmembrane segment spans residues 59–81 (YYALCGFGGVLSCGLTHTAVVPL). Residues 82–116 (DLVKCRMQVDPQKYKGIFNGFSITLKEDGVRGLAK) lie on the Mitochondrial matrix side of the membrane. K94 carries the post-translational modification N6-acetyllysine. K107 bears the N6-methyllysine mark. The helical transmembrane segment at 117–136 (GWAPTLIGYSMQGLCKFGFY) threads the bilayer. Topologically, residues 137–156 (EVFKALYSNILGEENTYLWR) are mitochondrial intermembrane. Residues 157–178 (TSLYLASSASAEFFADIALAPM) form a helical membrane-spanning segment. At 179-213 (EAAKVRIQTQPGYANTLREAVPKMYKEEGLNAFYK) the chain is on the mitochondrial matrix side. Y191 carries the post-translational modification Phosphotyrosine. Position 204 is an N6-acetyllysine (K204). Residues 214-233 (GVAPLWMRQIPYTMMKFACF) traverse the membrane as a helical segment. The Mitochondrial intermembrane segment spans residues 234–256 (ERTVEALYKFVVPKPRSECTKAE). A helical membrane pass occupies residues 257–279 (QLVVTFVAGYIAGVFCAIVSHPA). At 280 to 309 (DSVVSVLNKEKGSTASQVLQRLGFRGVWKG) the chain is on the mitochondrial matrix side. Residues 310 to 328 (LFARIIMIGTLTALQWFIY) traverse the membrane as a helical segment. At 329 to 357 (DSVKVYFRLPRPPPPEMPESLKKKLGLTE) the chain is on the mitochondrial intermembrane side.

It belongs to the mitochondrial carrier (TC 2.A.29) family. In terms of assembly, interacts with PPIF; the interaction is impaired by CsA.

It is found in the mitochondrion inner membrane. The catalysed reaction is phosphate(in) + H(+)(in) = phosphate(out) + H(+)(out). In terms of biological role, inorganic ion transporter that transports phosphate or copper ions across the mitochondrial inner membrane into the matrix compartment. Mediates proton-coupled symport of phosphate ions necessary for mitochondrial oxidative phosphorylation of ADP to ATP. Transports copper ions probably in the form of anionic copper(I) complexes to maintain mitochondrial matrix copper pool and to supply copper for cytochrome C oxidase complex assembly. May also play a role in regulation of the mitochondrial permeability transition pore (mPTP). The polypeptide is Solute carrier family 25 member 3 (Mus musculus (Mouse)).